We begin with the raw amino-acid sequence, 106 residues long: uncharacterized protein (106 aa).

Belongs to the HesB/IscA family.

This is an uncharacterized protein from Sinorhizobium fredii (strain NBRC 101917 / NGR234).